The primary structure comprises 360 residues: DAZ-associated protein 1 (360 aa).

RRM domains are found at residues 10-97 (GKLF…RSRP) and 114-191 (NKIF…RAEP). 2 disordered regions span residues 73–116 (HTLD…SNKI) and 184–345 (VEVK…DFPF). 2 stretches are compositionally biased toward basic and acidic residues: residues 91 to 112 (QPER…ENSR) and 184 to 195 (VEVKRAEPRDSK). Residues 203–231 (GSNQWGSRAMQSTANGWTGQPPQTWQGYS) are compositionally biased toward polar residues. Residues 242 to 253 (TIGGYGQPAGRG) are compositionally biased toward gly residues. Positions 271-301 (GPFPPPQGFPPGYATPPPFGYGYGPPPPPPD) are enriched in pro residues. The span at 328 to 345 (QSAQDLSKPPSGQQDFPF) shows a compositional bias: polar residues.

As to quaternary structure, component of a mRNP complex, at least composed of DAZAP1, IGF2BP3-A, STAU and VgRBP60. Binds to the 3'-UTR of Vg1 mRNA. Interacts with profilin, a protein involved in actin assembly. Interacts with VgRBP71. Expressed in oocytes.

The protein resides in the cytoplasm. Functionally, RNA-binding protein, which is required during gametogenesis. May be involved in the actin-dependent anchoring of Vg1 mRNA in the vegetal cortex of the oocyte. In Xenopus laevis (African clawed frog), this protein is DAZ-associated protein 1 (dazap1).